The primary structure comprises 266 residues: Isopentenyl phosphate kinase (266 aa).

Residue 5 to 9 (KLGGS) participates in ATP binding. Ala-47 lines the substrate pocket. Residue Gly-48 participates in ATP binding. Residues His-52 and Gly-157 each coordinate substrate. Residues Asp-178, 183 to 188 (YTRNPK), Gly-219, and Lys-223 contribute to the ATP site.

The protein belongs to the isopentenyl phosphate kinase family. Homodimer.

It carries out the reaction isopentenyl phosphate + ATP = isopentenyl diphosphate + ADP. In terms of biological role, catalyzes the formation of isopentenyl diphosphate (IPP), the building block of all isoprenoids. Has lower activity with dimethylallyl phosphate (DMAP) and isopentenyl thiolophosphate (ISP). Has low activity with 1-butyl phosphate (BP) and 3-buten-1-yl phosphate (BEP). Has no significant activity with geranyl phosphate (in vitro). The polypeptide is Isopentenyl phosphate kinase (Methanothermobacter thermautotrophicus (strain ATCC 29096 / DSM 1053 / JCM 10044 / NBRC 100330 / Delta H) (Methanobacterium thermoautotrophicum)).